A 251-amino-acid chain; its full sequence is Putative (5-formylfuran-3-yl)methyl phosphate synthase (251 aa).

Lys-29 functions as the Schiff-base intermediate with substrate in the catalytic mechanism. Lys-87 (proton acceptor) is an active-site residue.

It belongs to the MfnB family.

It catalyses the reaction 2 D-glyceraldehyde 3-phosphate = 4-(hydroxymethyl)-2-furancarboxaldehyde phosphate + phosphate + 2 H2O. Its function is as follows. Catalyzes the formation of 4-(hydroxymethyl)-2-furancarboxaldehyde phosphate (4-HFC-P) from two molecules of glyceraldehyde-3-P (GA-3-P). The protein is Putative (5-formylfuran-3-yl)methyl phosphate synthase of Kitasatospora aureofaciens (Streptomyces aureofaciens).